The primary structure comprises 696 residues: Serine/threonine-protein kinase sck1 (696 aa).

2 disordered regions span residues 1–59 and 77–118; these read MTEI…YDPV and HKEQ…TPPS. Polar residues predominate over residues 11–37; the sequence is SSNSENTNQASPSTIQSHSTQPVLSND. 2 stretches are compositionally biased toward basic and acidic residues: residues 38–49 and 77–88; these read HSTKVNDYEGKE and HKEQSLKEDKES. Positions 122–272 constitute a C2 domain; it reads IRHDTVVPKD…VQEAWYKLEP (151 aa). One can recognise a Protein kinase domain in the interval 302–563; that stretch reads FTALRLIGKG…TTELKEHPFF (262 aa). ATP-binding positions include 308 to 316 and lysine 331; that span reads IGKGTFGQV. The Proton acceptor role is filled by aspartate 428. Residues 564 to 643 enclose the AGC-kinase C-terminal domain; sequence ADINWDLLSK…VNKSIDEQFQ (80 aa). Threonine 632 carries the post-translational modification Phosphothreonine. Serine 665 carries the phosphoserine modification.

This sequence belongs to the protein kinase superfamily. AGC Ser/Thr protein kinase family. cAMP subfamily.

The catalysed reaction is L-seryl-[protein] + ATP = O-phospho-L-seryl-[protein] + ADP + H(+). It catalyses the reaction L-threonyl-[protein] + ATP = O-phospho-L-threonyl-[protein] + ADP + H(+). In terms of biological role, protein kinase that is part of growth control pathway which is at least partially redundant with the cAMP pathway. Required for trehalase activation. The protein is Serine/threonine-protein kinase sck1 (sck1) of Schizosaccharomyces pombe (strain 972 / ATCC 24843) (Fission yeast).